The chain runs to 245 residues: Uridylate kinase (245 aa).

13-16 is a binding site for ATP; the sequence is KLSG. Residue Gly56 coordinates UMP. ATP is bound by residues Gly57 and Arg61. UMP contacts are provided by residues Asp76 and 138–145; that span reads TGRPFFTT. ATP contacts are provided by Asn166, Tyr172, and Asp175.

The protein belongs to the UMP kinase family. In terms of assembly, homohexamer.

It localises to the cytoplasm. The catalysed reaction is UMP + ATP = UDP + ADP. The protein operates within pyrimidine metabolism; CTP biosynthesis via de novo pathway; UDP from UMP (UMPK route): step 1/1. Its activity is regulated as follows. Inhibited by UTP. Catalyzes the reversible phosphorylation of UMP to UDP. The protein is Uridylate kinase of Mycoplasma mobile (strain ATCC 43663 / 163K / NCTC 11711) (Mesomycoplasma mobile).